The following is a 351-amino-acid chain: Nicotinate-nucleotide--dimethylbenzimidazole phosphoribosyltransferase (351 aa).

Glu-317 (proton acceptor) is an active-site residue.

This sequence belongs to the CobT family.

It catalyses the reaction 5,6-dimethylbenzimidazole + nicotinate beta-D-ribonucleotide = alpha-ribazole 5'-phosphate + nicotinate + H(+). It participates in nucleoside biosynthesis; alpha-ribazole biosynthesis; alpha-ribazole from 5,6-dimethylbenzimidazole: step 1/2. Its function is as follows. Catalyzes the synthesis of alpha-ribazole-5'-phosphate from nicotinate mononucleotide (NAMN) and 5,6-dimethylbenzimidazole (DMB). This Pseudomonas fluorescens (strain SBW25) protein is Nicotinate-nucleotide--dimethylbenzimidazole phosphoribosyltransferase.